The following is a 540-amino-acid chain: Phosphoenolpyruvate carboxykinase (ATP) (540 aa).

R65 contributes to the substrate binding site. K87 is modified (N6-acetyllysine). Positions 207 and 213 each coordinate substrate. ATP is bound by residues K213, H232, and 248-256 (GLSGTGKTT). Mn(2+) contacts are provided by K213 and H232. D269 serves as a coordination point for Mn(2+). Residues E297, R333, 449–450 (RI), and T455 each bind ATP. R333 contributes to the substrate binding site. K523 bears the N6-acetyllysine mark.

The protein belongs to the phosphoenolpyruvate carboxykinase (ATP) family. As to quaternary structure, monomer. Mn(2+) serves as cofactor.

The protein localises to the cytoplasm. It carries out the reaction oxaloacetate + ATP = phosphoenolpyruvate + ADP + CO2. The protein operates within carbohydrate biosynthesis; gluconeogenesis. In terms of biological role, involved in the gluconeogenesis. Catalyzes the conversion of oxaloacetate (OAA) to phosphoenolpyruvate (PEP) through direct phosphoryl transfer between the nucleoside triphosphate and OAA. The chain is Phosphoenolpyruvate carboxykinase (ATP) from Escherichia coli O157:H7.